The chain runs to 297 residues: Bifunctional protein FolD (297 aa).

NADP(+)-binding positions include 169–171 (GRS), serine 196, and isoleucine 237.

Belongs to the tetrahydrofolate dehydrogenase/cyclohydrolase family. Homodimer.

The catalysed reaction is (6R)-5,10-methylene-5,6,7,8-tetrahydrofolate + NADP(+) = (6R)-5,10-methenyltetrahydrofolate + NADPH. It catalyses the reaction (6R)-5,10-methenyltetrahydrofolate + H2O = (6R)-10-formyltetrahydrofolate + H(+). The protein operates within one-carbon metabolism; tetrahydrofolate interconversion. Functionally, catalyzes the oxidation of 5,10-methylenetetrahydrofolate to 5,10-methenyltetrahydrofolate and then the hydrolysis of 5,10-methenyltetrahydrofolate to 10-formyltetrahydrofolate. The polypeptide is Bifunctional protein FolD (Salinibacter ruber (strain DSM 13855 / M31)).